The chain runs to 274 residues: MSDSQDPTTSPVVTTQVELGGCSRQGGGNGFLRFRQHQEVQAFLSLLEDSFVQEFLSKDPCFQISDKYLLAMVLVYFQRAHLKLSEYTHSSLFLALYLANDMEEDLEGPKCEIFPWALGKDWCLRVGKFLHQRDKLWARMGFRAVVSRQCCEEVMAKEPFHWAWTRDRRPHHGGVQRVCPQVPVRLPRGPGLSPPHCSPCGLPQHCSSHLLKPVSSKCPSLTSECHRPPSQNYLSRVKNAWGGDFLIVLPPQMQLEPGTYSLRIFPKPPARPGH.

The speedy/Ringo box; Required for CDK-binding stretch occupies residues 37–169; sequence HQEVQAFLSL…FHWAWTRDRR (133 aa).

The protein belongs to the Speedy/Ringo family. In terms of assembly, interacts with CDK1 and CDK2. Interacts with AURKB. As to expression, expressed in a variety of tissues including bone marrow, kidney, small intestine, liver, placenta and testis.

The protein localises to the cytoplasm. Functionally, promotes progression through the cell cycle via binding and activation of CDK1 and CDK2. Involved in the spindle-assembly checkpoint. Required for recruitment of MAD2L1, BUBR1 and BUB1 to kinetochores. Required for the correct localization of the active form of Aurora B in prometaphase. In Homo sapiens (Human), this protein is Speedy protein C.